A 1016-amino-acid chain; its full sequence is DENN domain-containing protein 1A (1016 aa).

Residues 13–145 (FEVYVEVAYP…HRLPIPDPGV (133 aa)) enclose the uDENN domain. The cDENN domain maps to 162–298 (ELPSIPENRN…VISSLKNRLK (137 aa)). The dDENN domain maps to 300–378 (VSTTTGDGVA…DGRLDLLNSG (79 aa)). An FXDXF motif motif is present at residues 381–385 (FSDVF). Positions 453 to 565 (DITENGCVSS…GPTPAPPDRA (113 aa)) are disordered. Ser473 is modified (phosphoserine). Basic and acidic residues predominate over residues 479-489 (QDPRLREDRRP). Residues 500-509 (PRPHVVRRPK) are compositionally biased toward basic residues. At Thr519 the chain carries Phosphothreonine. 6 positions are modified to phosphoserine: Ser520, Ser522, Ser523, Ser536, Ser538, and Ser546. A Clathrin box motif is present at residues 569–578 (DLLEDVFSSL). Ser592 carries the phosphoserine modification. Residues 681–737 (LSPSIKEETPIPTPGSITIPRPQGRKTPELGIVPPPPTARPAKLQAAGGPLGDFSSE) are disordered. Ser750 bears the Phosphoserine mark. Arg760 carries the omega-N-methylarginine modification. Disordered regions lie at residues 763–783 (PQGPTELLQPPSPAPGAAGTG) and 935–1016 (SARA…ETFE). Pro residues predominate over residues 954–970 (LLPPRPPQSLQPTPQPS). Composition is skewed to basic and acidic residues over residues 977–988 (DPFEDLLRKTKQ) and 1007–1016 (QLRRQWETFE).

Interacts with RAB35. Interacts with clathrin and with the adapter protein complex 2, AP-2. Interacts with ITSN1 and SH3GL2. Interacts (when phosphorylated) with YWHAE. Phosphorylated on serine and/or threonine in an Akt-dependent manner. Phosphorylation probably regulates the guanine nucleotide exchange factor (GEF) activity, possibly by disrupting an intramolecular interaction between the DENN domain and the C-terminus of the protein, thereby relieving the autoinhibition.

It localises to the cytoplasmic vesicle. Its subcellular location is the clathrin-coated vesicle membrane. The protein resides in the presynaptic cell membrane. The guanine nucleotide exchange factor (GEF) activity is autoinhibited. Autoinhibition may be the result of intramolecular interaction between the DENN domain and the C-terminus, which is disrupted upon phosphorylation. Activation is regulated by Akt activation. Its function is as follows. Guanine nucleotide exchange factor (GEF) regulating clathrin-mediated endocytosis through RAB35 activation. Promotes the exchange of GDP to GTP, converting inactive GDP-bound RAB35 into its active GTP-bound form. Regulates clathrin-mediated endocytosis of synaptic vesicles and mediates exit from early endosomes. Binds phosphatidylinositol-phosphates (PtdInsPs), with some preference for PtdIns(3)P. This Mus musculus (Mouse) protein is DENN domain-containing protein 1A (Dennd1a).